A 233-amino-acid chain; its full sequence is MAKISKRINKIREGVDRNKLYDLSAAIGLVKERAVAKFDETVEIAMNLGVDPRHADQMVRGVVNLPNGTGRTVRVAVFARGDKAEEAKKAGADIVGAEELFEIVNGGKIEFDRCIATPDMMPLVGRLGKVLGPRGMMPNPKVGTVTTDVAAAVAASKGGAVEFRVEKAGIIHAGIGKVSFDNAKLEENIKAFADAVIKAKPSAAKGEYVKRVSISSTMGVGVKVDPSTVKVVD.

It belongs to the universal ribosomal protein uL1 family. Part of the 50S ribosomal subunit.

Functionally, binds directly to 23S rRNA. The L1 stalk is quite mobile in the ribosome, and is involved in E site tRNA release. Protein L1 is also a translational repressor protein, it controls the translation of the L11 operon by binding to its mRNA. This is Large ribosomal subunit protein uL1 from Brucella canis (strain ATCC 23365 / NCTC 10854 / RM-666).